The primary structure comprises 437 residues: Adenylosuccinate synthetase (437 aa).

GTP is bound by residues 12-18 (GDEGKGK) and 40-42 (GHT). The active-site Proton acceptor is the Asp-13. Asp-13 and Gly-40 together coordinate Mg(2+). IMP-binding positions include 13–16 (DEGK), 38–41 (NAGH), Thr-128, Arg-142, Gln-223, Thr-238, and Arg-302. Residue His-41 is the Proton donor of the active site. 298–304 (TTTGRRR) contributes to the substrate binding site. GTP contacts are provided by residues Arg-304, 330-332 (KLD), and 412-414 (SLG).

Belongs to the adenylosuccinate synthetase family. As to quaternary structure, homodimer. Mg(2+) is required as a cofactor.

The protein resides in the cytoplasm. It carries out the reaction IMP + L-aspartate + GTP = N(6)-(1,2-dicarboxyethyl)-AMP + GDP + phosphate + 2 H(+). It participates in purine metabolism; AMP biosynthesis via de novo pathway; AMP from IMP: step 1/2. Plays an important role in the de novo pathway of purine nucleotide biosynthesis. Catalyzes the first committed step in the biosynthesis of AMP from IMP. This chain is Adenylosuccinate synthetase, found in Synechococcus sp. (strain CC9311).